The primary structure comprises 360 residues: Mitogen-activated protein kinase 14 (360 aa).

At Ser-2 the chain carries N-acetylserine. At Ser-2 the chain carries Phosphoserine. At Thr-16 the chain carries Phosphothreonine. The Protein kinase domain maps to Tyr-24 to Phe-308. ATP contacts are provided by residues Val-30 to Val-38 and Lys-53. The residue at position 53 (Lys-53) is an N6-acetyllysine. Asp-150 (proton acceptor) is an active-site residue. Lys-152 is modified (N6-acetyllysine). At Thr-180 the chain carries Phosphothreonine. A TXY motif is present at residues Thr-180–Tyr-182. Phosphotyrosine is present on Tyr-182. Tyr-323 carries the phosphotyrosine; by ZAP70 modification.

Belongs to the protein kinase superfamily. CMGC Ser/Thr protein kinase family. MAP kinase subfamily. Component of a signaling complex containing at least AKAP13, PKN1, MAPK14, ZAK and MAP2K3. Within this complex, AKAP13 interacts directly with PKN1, which in turn recruits MAPK14, MAP2K3 and ZAK. Binds to a kinase interaction motif within the protein tyrosine phosphatase, PTPRR. This interaction retains MAPK14 in the cytoplasm and prevents nuclear accumulation. Interacts with SPAG9 and GADD45A. Interacts with CDC25B, CDC25C, DUSP1, DUSP10, DUSP16, NP60, SUPT20H and TAB1. Interacts with casein kinase II subunits CSNK2A1 and CSNK2B. Interacts with PPM1D. Interacts with CDK5RAP3; recruits PPM1D to MAPK14 and may regulate its dephosphorylation. Interacts with DUSP2; this interaction does not lead to catalytic activation of DUSP2 and dephosphrylation of MAPK14. Mg(2+) is required as a cofactor. In terms of processing, dually phosphorylated on Thr-180 and Tyr-182 by the MAP2Ks MAP2K3/MKK3, MAP2K4/MKK4 and MAP2K6/MKK6 in response to inflammatory cytokines, environmental stress or growth factors, which activates the enzyme. Dual phosphorylation can also be mediated by TAB1-mediated autophosphorylation. TCR engagement in T-cells also leads to Tyr-323 phosphorylation by ZAP70. Dephosphorylated and inactivated by DUPS1, DUSP10 and DUSP16. PPM1D also mediates dephosphorylation and inactivation of MAPK14. Acetylated at Lys-53 and Lys-152 by KAT2B and EP300. Acetylation at Lys-53 increases the affinity for ATP and enhances kinase activity. Lys-53 and Lys-152 are deacetylated by HDAC3. Post-translationally, ubiquitinated. Ubiquitination leads to degradation by the proteasome pathway.

Its subcellular location is the cytoplasm. The protein resides in the nucleus. It carries out the reaction L-seryl-[protein] + ATP = O-phospho-L-seryl-[protein] + ADP + H(+). The enzyme catalyses L-threonyl-[protein] + ATP = O-phospho-L-threonyl-[protein] + ADP + H(+). Activated by cell stresses such as DNA damage, heat shock, osmotic shock, anisomycin and sodium arsenite, as well as pro-inflammatory stimuli such as bacterial lipopolysaccharide (LPS) and interleukin-1. Activation occurs through dual phosphorylation of Thr-180 and Tyr-182 by either of two dual specificity kinases, MAP2K3/MKK3 or MAP2K6/MKK6, and potentially also MAP2K4/MKK4, as well as by TAB1-mediated autophosphorylation. MAPK14 phosphorylated on both Thr-180 and Tyr-182 is 10-20-fold more active than MAPK14 phosphorylated only on Thr-180, whereas MAPK14 phosphorylated on Tyr-182 alone is inactive. whereas Thr-180 is necessary for catalysis, Tyr-182 may be required for auto-activation and substrate recognition. Phosphorylated at Tyr-323 by ZAP70 in an alternative activation pathway in response to TCR signaling in T-cells. This alternative pathway is inhibited by GADD45A. Inhibited by dual specificity phosphatases, such as DUSP1, DUSP10, and DUSP16. Specifically inhibited by the binding of pyridinyl-imidazole compounds, which are cytokine-suppressive anti-inflammatory drugs (CSAID). SB203580 is an inhibitor of MAPK14. In terms of biological role, serine/threonine kinase which acts as an essential component of the MAP kinase signal transduction pathway. MAPK14 is one of the four p38 MAPKs which play an important role in the cascades of cellular responses evoked by extracellular stimuli such as pro-inflammatory cytokines or physical stress leading to direct activation of transcription factors. Accordingly, p38 MAPKs phosphorylate a broad range of proteins and it has been estimated that they may have approximately 200 to 300 substrates each. Some of the targets are downstream kinases which are activated through phosphorylation and further phosphorylate additional targets. RPS6KA5/MSK1 and RPS6KA4/MSK2 can directly phosphorylate and activate transcription factors such as CREB1, ATF1, the NF-kappa-B isoform RELA/NFKB3, STAT1 and STAT3, but can also phosphorylate histone H3 and the nucleosomal protein HMGN1. RPS6KA5/MSK1 and RPS6KA4/MSK2 play important roles in the rapid induction of immediate-early genes in response to stress or mitogenic stimuli, either by inducing chromatin remodeling or by recruiting the transcription machinery. On the other hand, two other kinase targets, MAPKAPK2/MK2 and MAPKAPK3/MK3, participate in the control of gene expression mostly at the post-transcriptional level, by phosphorylating ZFP36 (tristetraprolin) and ELAVL1, and by regulating EEF2K, which is important for the elongation of mRNA during translation. MKNK1/MNK1 and MKNK2/MNK2, two other kinases activated by p38 MAPKs, regulate protein synthesis by phosphorylating the initiation factor EIF4E2. MAPK14 also interacts with casein kinase II, leading to its activation through autophosphorylation and further phosphorylation of TP53/p53. In the cytoplasm, the p38 MAPK pathway is an important regulator of protein turnover. For example, CFLAR is an inhibitor of TNF-induced apoptosis whose proteasome-mediated degradation is regulated by p38 MAPK phosphorylation. In a similar way, MAPK14 phosphorylates the ubiquitin ligase SIAH2, regulating its activity towards EGLN3. MAPK14 may also inhibit the lysosomal degradation pathway of autophagy by interfering with the intracellular trafficking of the transmembrane protein ATG9. Another function of MAPK14 is to regulate the endocytosis of membrane receptors by different mechanisms that impinge on the small GTPase RAB5A. In addition, clathrin-mediated EGFR internalization induced by inflammatory cytokines and UV irradiation depends on MAPK14-mediated phosphorylation of EGFR itself as well as of RAB5A effectors. Ectodomain shedding of transmembrane proteins is regulated by p38 MAPKs as well. In response to inflammatory stimuli, p38 MAPKs phosphorylate the membrane-associated metalloprotease ADAM17. Such phosphorylation is required for ADAM17-mediated ectodomain shedding of TGF-alpha family ligands, which results in the activation of EGFR signaling and cell proliferation. Another p38 MAPK substrate is FGFR1. FGFR1 can be translocated from the extracellular space into the cytosol and nucleus of target cells, and regulates processes such as rRNA synthesis and cell growth. FGFR1 translocation requires p38 MAPK activation. In the nucleus, many transcription factors are phosphorylated and activated by p38 MAPKs in response to different stimuli. Classical examples include ATF1, ATF2, ATF6, ELK1, PTPRH, DDIT3, TP53/p53 and MEF2C and MEF2A. The p38 MAPKs are emerging as important modulators of gene expression by regulating chromatin modifiers and remodelers. The promoters of several genes involved in the inflammatory response, such as IL6, IL8 and IL12B, display a p38 MAPK-dependent enrichment of histone H3 phosphorylation on 'Ser-10' (H3S10ph) in LPS-stimulated myeloid cells. This phosphorylation enhances the accessibility of the cryptic NF-kappa-B-binding sites marking promoters for increased NF-kappa-B recruitment. Phosphorylates CDC25B and CDC25C which is required for binding to 14-3-3 proteins and leads to initiation of a G2 delay after ultraviolet radiation. Phosphorylates TIAR following DNA damage, releasing TIAR from GADD45A mRNA and preventing mRNA degradation. The p38 MAPKs may also have kinase-independent roles, which are thought to be due to the binding to targets in the absence of phosphorylation. Protein O-Glc-N-acylation catalyzed by the OGT is regulated by MAPK14, and, although OGT does not seem to be phosphorylated by MAPK14, their interaction increases upon MAPK14 activation induced by glucose deprivation. This interaction may regulate OGT activity by recruiting it to specific targets such as neurofilament H, stimulating its O-Glc-N-acylation. Required in mid-fetal development for the growth of embryo-derived blood vessels in the labyrinth layer of the placenta. Also plays an essential role in developmental and stress-induced erythropoiesis, through regulation of EPO gene expression. Phosphorylates S100A9 at 'Thr-113'. The polypeptide is Mitogen-activated protein kinase 14 (Rattus norvegicus (Rat)).